A 104-amino-acid chain; its full sequence is Signal recognition particle 19 kDa protein (104 aa).

The protein belongs to the SRP19 family. As to quaternary structure, part of the signal recognition particle protein translocation system, which is composed of SRP and FtsY. Archaeal SRP consists of a 7S RNA molecule of 300 nucleotides and two protein subunits: SRP54 and SRP19.

It is found in the cytoplasm. Functionally, involved in targeting and insertion of nascent membrane proteins into the cytoplasmic membrane. Binds directly to 7S RNA and mediates binding of the 54 kDa subunit of the SRP. The protein is Signal recognition particle 19 kDa protein of Archaeoglobus fulgidus (strain ATCC 49558 / DSM 4304 / JCM 9628 / NBRC 100126 / VC-16).